A 118-amino-acid polypeptide reads, in one-letter code: Waprin-Enh1 (118 aa).

The first 24 residues, 1–24 (MKTLTGLLLVGLLALWIGLPSTSS), serve as a signal peptide directing secretion. WAP domains lie at 25–72 (KILF…RSCR) and 74–118 (PPVL…RICK). Disulfide bonds link Cys30/Cys63, Cys40/Cys67, Cys50/Cys62, Cys56/Cys71, Cys81/Cys109, Cys88/Cys113, Cys96/Cys108, and Cys102/Cys117.

It belongs to the venom waprin family. In terms of tissue distribution, expressed by the venom gland.

It is found in the secreted. Functionally, damages membranes of susceptible bacteria. Has no hemolytic activity. Not toxic to mice. Does not inhibit the proteinases elastase and cathepsin G. The sequence is that of Waprin-Enh1 from Pseudoferania polylepis (Macleay's water snake).